Consider the following 1534-residue polypeptide: MDEGSADAGASGRRSRARGSEAVARSAALERLRAIRDGGARAAAAVQVRIEAPIYDTVAEEDYAALVARRRKDAGAFIVDDDGLGYADDGREEDWTHRTIHSSSDEGSDGEDGAPRKRKQPRPQSKRPPQQSAAAASLSAAAAMMGKQRLSSMFTSSVFRKPGSDRGRDSSLAADSIVDDVIAEFAPDDNDREERRRRVGRVCAPAPAPTTTAHIKAENVAVDTAMAFRSDNVFEAHEVSDHGNDMDMELKPDVEMEPKLDTPLGASAELANNSNSLEEPKQEANGEVKIEKVHRLNAKIKTEDSRNGDMASATAGWMKICGDGDNAGGEGAVAANSNTGVDESSEFELKDGALPFYILDAYEEPFGANSGTVYLFGKVEVGKRFHSCCVVVKNMQRCIYAIPSSSIFPRDTISRLEKNSTTSDSSPSLRASLHELASGLKSEIADKLSDFNVSNFAMTPVKRNYAFERTDLPNGEQYVLKINYPYKDPALPTDLRGQHFHALLGTNNSALELLLIKRKIKGPSWLSISKFLACPATQRVSWCKFEVTVDSPKDISVLMTSTTLEVPPVVVAAVNLKTIINEKHNVHEIVSASVICCHRVKIDSPMRSEDWQKRGMLSHFTVMRKLEGSIFPIGLSKESSDRNQKAGSNVLALESSERALLNRLMIELSKLDCDVLVGHNISGFDLDVLLHRAQTCKVPSNMWSKIGRLRRSVMPRLTKGNTLYGSGASPGIMSCIAGRLLCDTYLCSRDLLKEVSYSLTQLAETQLKKERKEVSPHDIPPMFQSSGALLKLVEYGETDACLALELMFHLSVLPLTRQLTNISGNLWGKTLQGSRAQRVEYLLLHAFHARKFIVPDKFARSKEFNSTKRKMNPDTEAARPDEADPSIDDEGHHVDQGKTKKGPSYAGGLVLEPKKGLYDKYVLLLDFNSLYPSIIQEYNICFTTVDRSADGNVPNLPASKTTGVLPELLKSLVERRRMVKSWLKTASGLKRQQFDIQQQALKLTANSMYGCLGFSNSRFYAKPLAELITLQGREILQNTVDLVQNNLNLEVIYGDTDSIMIHTGLDDISRAKGIAGKVIQEVNKKYRCLEIDLDGIYKRMLLLKKKKYAAIKVALDGSLRENIERKGLDMVRRDWSLLSKEIGDFCLNQILSGGSCDDVIESIHSSLVQVQEQMRGGQTELEKYIITKSLTKAPEDYPDAKNQPHVQVALRLKQNGYSGCSAGDTVPYIICSQQDSESTHSGGIAQRARHPEELKRNPDKWMIDIDYYLSQQIHPVVSRLCASIQGTSPARLAECLGLDSSKFQSRLTESDNQDTSSMLLSVIDDEDERYRGCEPLRLSCPSCSTTFDCPPVSSLIIGSSSGNVSNPNEGNDASINFWRRMRCPRCPDDTDESRVSPAVLANQMKRQADSFINLYYKGLLMCDDEGCKYSTHSVNLRVMGDSERGTICPNYPRCNGHLVRQYTEADLYRQLSYFCYVVDATRCLEKLDQKARLPFEKEFAALSQTINLALMEVQKIRDRCAFGWVQLKDLAISI.

Positions 1-12 are enriched in low complexity; the sequence is MDEGSADAGASG. 3 disordered regions span residues 1 to 23, 96 to 141, and 864 to 905; these read MDEG…SEAV, THRT…LSAA, and FNST…GPSY. The segment covering 116–125 has biased composition (basic residues); the sequence is RKRKQPRPQS. Over residues 127–141 the composition is skewed to low complexity; the sequence is RPPQQSAAAASLSAA. 2 stretches are compositionally biased toward basic and acidic residues: residues 864 to 882 and 889 to 898; these read FNST…RPDE and DEGHHVDQGK. The Zn(2+) site is built by cysteine 1340, cysteine 1343, cysteine 1383, cysteine 1386, cysteine 1422, cysteine 1427, cysteine 1448, and cysteine 1454. The CysA-type zinc finger occupies 1340-1386; sequence CPSCSTTFDCPPVSSLIIGSSSGNVSNPNEGNDASINFWRRMRCPRC. The CysB motif signature appears at 1422-1451; the sequence is CDDEGCKYSTHSVNLRVMGDSERGTICPNY.

It belongs to the DNA polymerase type-B family.

The protein localises to the nucleus. The catalysed reaction is DNA(n) + a 2'-deoxyribonucleoside 5'-triphosphate = DNA(n+1) + diphosphate. Functionally, polymerase alpha in a complex with DNA primase is a replicative polymerase. This chain is DNA polymerase alpha catalytic subunit, found in Oryza sativa subsp. japonica (Rice).